The sequence spans 352 residues: Peptide chain release factor 1 (352 aa).

At Q233 the chain carries N5-methylglutamine. The segment at 288–309 is disordered; it reads NAKDRKEQVGSGDRSERIRTYN. Positions 289–306 are enriched in basic and acidic residues; the sequence is AKDRKEQVGSGDRSERIR.

The protein belongs to the prokaryotic/mitochondrial release factor family. Methylated by PrmC. Methylation increases the termination efficiency of RF1.

It is found in the cytoplasm. Functionally, peptide chain release factor 1 directs the termination of translation in response to the peptide chain termination codons UAG and UAA. In Helicobacter pylori (strain J99 / ATCC 700824) (Campylobacter pylori J99), this protein is Peptide chain release factor 1 (prfA).